We begin with the raw amino-acid sequence, 76 residues long: Putative membrane protein insertion efficiency factor (76 aa).

The protein belongs to the UPF0161 family.

The protein localises to the cell inner membrane. Functionally, could be involved in insertion of integral membrane proteins into the membrane. The chain is Putative membrane protein insertion efficiency factor from Porphyromonas gingivalis (strain ATCC 33277 / DSM 20709 / CIP 103683 / JCM 12257 / NCTC 11834 / 2561).